A 190-amino-acid polypeptide reads, in one-letter code: UPF0301 protein PSPTO_5037 (190 aa).

It belongs to the UPF0301 (AlgH) family.

In Pseudomonas syringae pv. tomato (strain ATCC BAA-871 / DC3000), this protein is UPF0301 protein PSPTO_5037.